The following is a 505-amino-acid chain: Deoxyguanosinetriphosphate triphosphohydrolase (505 aa).

The HD domain occupies 66–273 (RLTHSMEVQQ…MEAADDISYC (208 aa)).

This sequence belongs to the dGTPase family. Type 1 subfamily. As to quaternary structure, homotetramer. The cofactor is Mg(2+).

It carries out the reaction dGTP + H2O = 2'-deoxyguanosine + triphosphate + H(+). DGTPase preferentially hydrolyzes dGTP over the other canonical NTPs. The protein is Deoxyguanosinetriphosphate triphosphohydrolase of Salmonella choleraesuis (strain SC-B67).